The chain runs to 473 residues: H(+)/Cl(-) exchange transporter ClcA (473 aa).

Residues 1 to 32 lie on the Cytoplasmic side of the membrane; it reads MKTDTPSLETPQAARLRRRQLIRQLLERDKTP. Residues 33–69 traverse the membrane as a helical segment; it reads LAILFMAAVVGTLVGLAAVAFDKGVAWLQNQRMGALV. Residues 70 to 76 lie on the Periplasmic side of the membrane; it reads HTADNYP. A helical transmembrane segment spans residues 77–100; it reads LLLTVAFLCSAVLAMFGYFLVRKY. Residues 106-110 carry the Selectivity filter part_1 motif; sequence GSGIP. Ser107 contacts chloride. The segment at residues 109–116 is an intramembrane region (helical); sequence IPEIEGAL. Over 117-123 the chain is Cytoplasmic; that stretch reads EDQRPVR. 2 helical membrane-spanning segments follow: residues 124–141 and 148–166; these read WWRV…TLGG and EGPT…LDIF. The Selectivity filter part_2 signature appears at 146–150; the sequence is GREGP. At 167 to 176 the chain is on the cytoplasmic side; that stretch reads RLKGDEARHT. Intramembrane regions (helical) lie at residues 177-189 and 193-201; these read LLAT…LAAA and PLAGILFII. At 202 to 214 the chain is on the cytoplasmic side; sequence EEMRPQFRYTLIS. A helical membrane pass occupies residues 215 to 232; it reads IKAVFIGVIMSTIMYRIF. The Periplasmic segment spans residues 233–252; that stretch reads NHEVALIDVGKLSDAPLNTL. The chain crosses the membrane as a helical span at residues 253–281; sequence WLYLILGIIFGIFGPIFNKWVLGMQDLLH. At 282–287 the chain is on the cytoplasmic side; sequence RVHGGN. The chain crosses the membrane as a helical span at residues 288-309; the sequence is ITKWVLMGGAIGGLCGLLGFVA. The Periplasmic segment spans residues 310 to 329; that stretch reads PATSGGGFNLIPIATAGNFS. The next 2 membrane-spanning stretches (helical) occupy residues 330 to 349 and 355 to 376; these read MGML…LCFS and GIFA…MVAV. Positions 355–359 match the Selectivity filter part_3 motif; the sequence is GIFAP. Ile356 and Phe357 together coordinate chloride. Residues 377 to 386 lie on the Periplasmic side of the membrane; that stretch reads ELFPQYHLEA. Positions 387-401 form an intramembrane region, helical; sequence GTFAIAGMGALLAAS. An intramembrane region (note=Loop between two helices) is located at residues 402 to 404; sequence IRA. The segment at residues 405–416 is an intramembrane region (helical); sequence PLTGIILVLEMT. The segment at residues 417 to 421 is an intramembrane region (note=Loop between two helices); the sequence is DNYQL. A helical membrane pass occupies residues 422-438; sequence ILPMIITGLGATLLAQF. Topologically, residues 439–473 are cytoplasmic; it reads TGGKPLYSAILARTLAKQEAEQLARSKAASASENT. Tyr445 contributes to the chloride binding site.

The protein belongs to the chloride channel (TC 2.A.49) family. ClcA subfamily. In terms of assembly, homodimer.

The protein localises to the cell inner membrane. It catalyses the reaction 2 chloride(in) + H(+)(out) = 2 chloride(out) + H(+)(in). Its function is as follows. Proton-coupled chloride transporter. Functions as antiport system and exchanges two chloride ions for 1 proton. Probably acts as an electrical shunt for an outwardly-directed proton pump that is linked to amino acid decarboxylation, as part of the extreme acid resistance (XAR) response. The polypeptide is H(+)/Cl(-) exchange transporter ClcA (Escherichia coli O139:H28 (strain E24377A / ETEC)).